We begin with the raw amino-acid sequence, 198 residues long: NAD(P)H quinone oxidoreductase PST1 (198 aa).

The Flavodoxin-like domain occupies V6–F192. FMN contacts are provided by residues S12–H16 and V112–G164.

Belongs to the WrbA family. The cofactor is FMN.

It localises to the cell membrane. It carries out the reaction a quinone + NADH + H(+) = a quinol + NAD(+). The catalysed reaction is a quinone + NADPH + H(+) = a quinol + NADP(+). Flavodoxin-like protein (FLP) that plays a role in cell wall integrity, oxidative stress protection and virulence. FLPs act as NAD(P)H quinone oxidoreductases. Reduces ubiquinone (coenzyme Q), enabling it to serve as an antioxidant in the membrane. This chain is NAD(P)H quinone oxidoreductase PST1, found in Candida albicans (strain SC5314 / ATCC MYA-2876) (Yeast).